Reading from the N-terminus, the 128-residue chain is Aspartate 1-decarboxylase (128 aa).

The active-site Schiff-base intermediate with substrate; via pyruvic acid is S25. At S25 the chain carries Pyruvic acid (Ser). Residue T57 participates in substrate binding. Residue Y58 is the Proton donor of the active site. 73-75 (GAA) provides a ligand contact to substrate.

It belongs to the PanD family. Heterooctamer of four alpha and four beta subunits. Pyruvate serves as cofactor. In terms of processing, is synthesized initially as an inactive proenzyme, which is activated by self-cleavage at a specific serine bond to produce a beta-subunit with a hydroxyl group at its C-terminus and an alpha-subunit with a pyruvoyl group at its N-terminus.

It localises to the cytoplasm. The catalysed reaction is L-aspartate + H(+) = beta-alanine + CO2. It participates in cofactor biosynthesis; (R)-pantothenate biosynthesis; beta-alanine from L-aspartate: step 1/1. Its function is as follows. Catalyzes the pyruvoyl-dependent decarboxylation of aspartate to produce beta-alanine. This Staphylococcus epidermidis (strain ATCC 35984 / DSM 28319 / BCRC 17069 / CCUG 31568 / BM 3577 / RP62A) protein is Aspartate 1-decarboxylase.